A 627-amino-acid polypeptide reads, in one-letter code: Pescadillo homolog (627 aa).

The BRCT domain occupies Arg-321–Ile-414. 3 disordered regions span residues His-450 to Asp-469, Tyr-488 to Pro-566, and Thr-595 to Lys-627. Residues Ser-453 and Ser-457 each carry the phosphoserine modification. Acidic residues-rich tracts occupy residues Asp-454–Asp-469 and Val-497–Asp-521. The segment covering Glu-522–Lys-533 has biased composition (basic and acidic residues). A compositionally biased stretch (basic residues) spans Lys-540–Val-549. Basic and acidic residues-rich tracts occupy residues His-550–Leu-559 and Thr-595–Ala-615. The stretch at Lys-582–Leu-625 forms a coiled coil. A compositionally biased stretch (low complexity) spans Ala-616–Lys-627.

It belongs to the pescadillo family.

Its subcellular location is the nucleus. The protein localises to the nucleolus. It is found in the nucleoplasm. Its function is as follows. Required for maturation of ribosomal RNAs and formation of the large ribosomal subunit. This chain is Pescadillo homolog, found in Drosophila simulans (Fruit fly).